A 415-amino-acid chain; its full sequence is MVDAPHSKCGTFGYVGSSPTAPTLMNTYTRFDISFKKGNGCWLWDEKGKKYLDAVAGIATCSLGHSNRILRKKLSAQLKKVQHISNLYKIEEQEELSKYLTKQSCAESVFFCNSGAEANESAIKLIKKYGNTVHKGKESFILAAESSFHGRTLATLSATGQPKYQKGFEPMVKGFKFFKYNDIASVKKLFEELKANNQKASGILVEPIQGEGGVIPGDKKFFKELREICNKYNSLLILDEVQSGVGRTGKMWGYENLEIEPDGFTLAKGLGGGHAIGALLVQKKANIFTPGDHASTFGGNPFACRAAITVLEEIKRRKILKNVLERGNQLNEGFTKISAKFPKIISGIRGLGLIQGLVINDSYTDAKTITLKAFDKGLLLVPAGGNVVRFVPPLIISRNEINILLKKLDLIFEEM.

Residues 115 to 116 (GA) and F148 each bind pyridoxal 5'-phosphate. A N(2)-acetyl-L-ornithine-binding site is contributed by R151. Pyridoxal 5'-phosphate is bound at residue 239–242 (DEVQ). N6-(pyridoxal phosphate)lysine is present on K268. Residue S295 participates in N(2)-acetyl-L-ornithine binding. Position 296 (T296) interacts with pyridoxal 5'-phosphate.

The protein belongs to the class-III pyridoxal-phosphate-dependent aminotransferase family. ArgD subfamily. Homodimer. It depends on pyridoxal 5'-phosphate as a cofactor.

It is found in the cytoplasm. It catalyses the reaction N(2)-acetyl-L-ornithine + 2-oxoglutarate = N-acetyl-L-glutamate 5-semialdehyde + L-glutamate. It participates in amino-acid biosynthesis; L-arginine biosynthesis; N(2)-acetyl-L-ornithine from L-glutamate: step 4/4. In Prochlorococcus marinus subsp. pastoris (strain CCMP1986 / NIES-2087 / MED4), this protein is Acetylornithine aminotransferase.